Reading from the N-terminus, the 240-residue chain is Ribonuclease PH (240 aa).

Residues Arg-87 and 125–127 (GTR) each bind phosphate.

The protein belongs to the RNase PH family. In terms of assembly, homohexameric ring arranged as a trimer of dimers.

It catalyses the reaction tRNA(n+1) + phosphate = tRNA(n) + a ribonucleoside 5'-diphosphate. Its function is as follows. Phosphorolytic 3'-5' exoribonuclease that plays an important role in tRNA 3'-end maturation. Removes nucleotide residues following the 3'-CCA terminus of tRNAs; can also add nucleotides to the ends of RNA molecules by using nucleoside diphosphates as substrates, but this may not be physiologically important. Probably plays a role in initiation of 16S rRNA degradation (leading to ribosome degradation) during starvation. This Ruminiclostridium cellulolyticum (strain ATCC 35319 / DSM 5812 / JCM 6584 / H10) (Clostridium cellulolyticum) protein is Ribonuclease PH.